Consider the following 201-residue polypeptide: 3-isopropylmalate dehydratase small subunit (201 aa).

The protein belongs to the LeuD family. LeuD type 1 subfamily. As to quaternary structure, heterodimer of LeuC and LeuD.

It catalyses the reaction (2R,3S)-3-isopropylmalate = (2S)-2-isopropylmalate. The protein operates within amino-acid biosynthesis; L-leucine biosynthesis; L-leucine from 3-methyl-2-oxobutanoate: step 2/4. In terms of biological role, catalyzes the isomerization between 2-isopropylmalate and 3-isopropylmalate, via the formation of 2-isopropylmaleate. This Shewanella oneidensis (strain ATCC 700550 / JCM 31522 / CIP 106686 / LMG 19005 / NCIMB 14063 / MR-1) protein is 3-isopropylmalate dehydratase small subunit.